The primary structure comprises 177 residues: ATP synthase subunit delta, chloroplastic (177 aa).

Belongs to the ATPase delta chain family. F-type ATPases have 2 components, F(1) - the catalytic core - and F(0) - the membrane proton channel. F(1) has five subunits: alpha(3), beta(3), gamma(1), delta(1), epsilon(1). CF(0) has four main subunits: a(1), b(1), b'(1) and c(10-14). The alpha and beta chains form an alternating ring which encloses part of the gamma chain. F(1) is attached to F(0) by a central stalk formed by the gamma and epsilon chains, while a peripheral stalk is formed by the delta, b and b' chains.

The protein resides in the plastid. The protein localises to the chloroplast thylakoid membrane. F(1)F(0) ATP synthase produces ATP from ADP in the presence of a proton or sodium gradient. F-type ATPases consist of two structural domains, F(1) containing the extramembraneous catalytic core and F(0) containing the membrane proton channel, linked together by a central stalk and a peripheral stalk. During catalysis, ATP synthesis in the catalytic domain of F(1) is coupled via a rotary mechanism of the central stalk subunits to proton translocation. Functionally, this protein is part of the stalk that links CF(0) to CF(1). It either transmits conformational changes from CF(0) to CF(1) or is implicated in proton conduction. In Galdieria sulphuraria (Red alga), this protein is ATP synthase subunit delta, chloroplastic.